The following is a 440-amino-acid chain: Glutamyl-tRNA reductase (440 aa).

Residues 47 to 50, Ser110, 115 to 117, and Gln121 contribute to the substrate site; these read TCNR and ERE. The active-site Nucleophile is Cys48. NADP(+) is bound at residue 192-197; sequence GTGAYA.

The protein belongs to the glutamyl-tRNA reductase family. As to quaternary structure, homodimer.

The catalysed reaction is (S)-4-amino-5-oxopentanoate + tRNA(Glu) + NADP(+) = L-glutamyl-tRNA(Glu) + NADPH + H(+). It functions in the pathway porphyrin-containing compound metabolism; protoporphyrin-IX biosynthesis; 5-aminolevulinate from L-glutamyl-tRNA(Glu): step 1/2. In terms of biological role, catalyzes the NADPH-dependent reduction of glutamyl-tRNA(Glu) to glutamate 1-semialdehyde (GSA). In Paenarthrobacter aurescens (strain TC1), this protein is Glutamyl-tRNA reductase.